The chain runs to 386 residues: Galactokinase (386 aa).

Position 32–35 (32–35 (EHTD)) interacts with substrate. Residues Ser-66 and 123-129 (GASLSSS) each bind ATP. Positions 129 and 161 each coordinate Mg(2+). The active-site Proton acceptor is the Asp-173. Tyr-223 is a substrate binding site.

Belongs to the GHMP kinase family. GalK subfamily.

Its subcellular location is the cytoplasm. The enzyme catalyses alpha-D-galactose + ATP = alpha-D-galactose 1-phosphate + ADP + H(+). It participates in carbohydrate metabolism; galactose metabolism. Its function is as follows. Catalyzes the transfer of the gamma-phosphate of ATP to D-galactose to form alpha-D-galactose-1-phosphate (Gal-1-P). The chain is Galactokinase from Staphylococcus saprophyticus subsp. saprophyticus (strain ATCC 15305 / DSM 20229 / NCIMB 8711 / NCTC 7292 / S-41).